The following is a 288-amino-acid chain: Inositol monophosphatase 2 (288 aa).

Positions 81, 101, 103, and 104 each coordinate Mg(2+). Glu81 provides a ligand contact to substrate. Substrate-binding positions include 103–106 (IDGT), 205–207 (GSS), Gln224, and Asp231. Position 231 (Asp231) interacts with Mg(2+).

This sequence belongs to the inositol monophosphatase superfamily. Homodimer. Requires Mg(2+) as cofactor.

The protein localises to the cytoplasm. It carries out the reaction a myo-inositol phosphate + H2O = myo-inositol + phosphate. It catalyses the reaction 1D-myo-inositol 1-phosphate + H2O = myo-inositol + phosphate. The enzyme catalyses 1D-myo-inositol 2-phosphate + H2O = myo-inositol + phosphate. The catalysed reaction is 1D-myo-inositol 3-phosphate + H2O = myo-inositol + phosphate. It carries out the reaction 1D-myo-inositol 4-phosphate + H2O = myo-inositol + phosphate. It catalyses the reaction 1D-myo-inositol 5-phosphate + H2O = myo-inositol + phosphate. The enzyme catalyses 1D-myo-inositol 6-phosphate + H2O = myo-inositol + phosphate. The catalysed reaction is alpha-D-glucose 1-phosphate + H2O = D-glucose + phosphate. It carries out the reaction glycerol 2-phosphate + H2O = glycerol + phosphate. It catalyses the reaction adenosine 2'-phosphate + H2O = adenosine + phosphate. The protein operates within polyol metabolism; myo-inositol biosynthesis; myo-inositol from D-glucose 6-phosphate: step 2/2. With respect to regulation, inhibited by high Li(+) and restricted Mg(2+) concentrations. Phosphatase that can use myo-inositol monophosphates, myo-inositol 1,4-diphosphate, scyllo-inositol-1,4-diphosphate, glucose-1-phosphate, beta-glycerophosphate and 2'-AMP as substrates in vitro. It is likely that IMPA2 has an as yet unidentified in vivo substrate(s). Has been implicated as the pharmacological target for lithium (Li(+)) action in brain. The polypeptide is Inositol monophosphatase 2 (Homo sapiens (Human)).